A 116-amino-acid polypeptide reads, in one-letter code: MILQQPLERGPPGRDPRATTGVTLGLDTREPLHKHFLSEENMATHFSRLSLHNDHPYCSPPVTFPEALPPLRSPCPELLLWRYPGSLIPEALRLLRLGDNPSPYYSASPAGEIMEL.

Positions 1–22 (MILQQPLERGPPGRDPRATTGV) are disordered. Residues 54 to 57 (DHPY) form an interaction with HCFC1 region. The Nuclear export signal signature appears at 88 to 97 (IPEALRLLRL).

As to quaternary structure, interacts with HCFC1.

The protein resides in the cytoplasm. It localises to the nucleus. Regulates HCFC1 activity by modulating its subcellular localization. Overexpression of HCFC1R1 leads to accumulation of HCFC1 in the cytoplasm. HCFC1R1-mediated export may provide the pool of cytoplasmic HCFC1 required for import of virion-derived VP16 into the nucleus. This is Host cell factor C1 regulator 1 (Hcfc1r1) from Rattus norvegicus (Rat).